The primary structure comprises 271 residues: Phosphatidylglycerol--prolipoprotein diacylglyceryl transferase (271 aa).

7 helical membrane passes run 25–45, 60–80, 103–123, 134–154, 181–201, 209–229, and 235–255; these read WYGIMYVIALLLALLLAKFFV, YFIWVEIGVILGARLGYILIY, FVGIRGMSYHGAIIGFLIATL, WIFLDLVALSVPLAYVFGRIG, PSQLYEAFLEGIVVFIIVYLA, GELILVYAGAYSLARFICEFY, and GIGFVLWGMSMGQILSFIMFI. Arginine 152 contacts a 1,2-diacyl-sn-glycero-3-phospho-(1'-sn-glycerol).

The protein belongs to the Lgt family.

The protein resides in the cell inner membrane. It carries out the reaction L-cysteinyl-[prolipoprotein] + a 1,2-diacyl-sn-glycero-3-phospho-(1'-sn-glycerol) = an S-1,2-diacyl-sn-glyceryl-L-cysteinyl-[prolipoprotein] + sn-glycerol 1-phosphate + H(+). Its pathway is protein modification; lipoprotein biosynthesis (diacylglyceryl transfer). Catalyzes the transfer of the diacylglyceryl group from phosphatidylglycerol to the sulfhydryl group of the N-terminal cysteine of a prolipoprotein, the first step in the formation of mature lipoproteins. The protein is Phosphatidylglycerol--prolipoprotein diacylglyceryl transferase of Campylobacter jejuni subsp. jejuni serotype O:23/36 (strain 81-176).